The sequence spans 348 residues: Dihydroorotase (348 aa).

Zn(2+) is bound by residues His-17 and His-19. Residues 19–21 (HLR) and Asn-45 contribute to the substrate site. Residues Lys-103, His-140, and His-178 each contribute to the Zn(2+) site. Position 103 is an N6-carboxylysine (Lys-103). Residue His-140 coordinates substrate. Residue Leu-223 coordinates substrate. Zn(2+) is bound at residue Asp-251. Asp-251 is an active-site residue. His-255 and Ala-267 together coordinate substrate.

This sequence belongs to the metallo-dependent hydrolases superfamily. DHOase family. Class II DHOase subfamily. Homodimer. Zn(2+) serves as cofactor.

The catalysed reaction is (S)-dihydroorotate + H2O = N-carbamoyl-L-aspartate + H(+). It participates in pyrimidine metabolism; UMP biosynthesis via de novo pathway; (S)-dihydroorotate from bicarbonate: step 3/3. Functionally, catalyzes the reversible cyclization of carbamoyl aspartate to dihydroorotate. The sequence is that of Dihydroorotase from Salmonella paratyphi C (strain RKS4594).